The following is a 309-amino-acid chain: Sodium/potassium-transporting ATPase subunit beta-1 (309 aa).

Topologically, residues 1–45 (MSKNNGKGAKGEFEFPQPAKKQTFSEMIYNPQEGTFFGRTGKSWS) are cytoplasmic. A helical; Signal-anchor for type II membrane protein transmembrane segment spans residues 46 to 66 (QLLLFYTIFYIVLAALFTICM). Residues 67–309 (QGLLSTISDT…GSVTFQILLD (243 aa)) are Extracellular-facing. N-linked (GlcNAc...) asparagine glycosylation occurs at asparagine 133. Intrachain disulfides connect cysteine 143–cysteine 155 and cysteine 165–cysteine 179. An N-linked (GlcNAc...) asparagine glycan is attached at asparagine 211. Cysteines 225 and 282 form a disulfide.

The protein belongs to the X(+)/potassium ATPases subunit beta family. As to quaternary structure, the sodium/potassium-transporting ATPase is composed of a catalytic alpha subunit, an auxiliary non-catalytic beta subunit and an additional regulatory subunit. Interacts with nkain. In embryos, it is expressed in the neurons of the CNS and PNS, in Garland cells and posterior spiracles. In adults, it is concentrated in the thorax and abdomen (muscle tissue, digestive system and Malpighian tubules) and weakly expressed in the head. Expression is diffuse in the nervous system.

The protein localises to the cell membrane. Functionally, this is the non-catalytic component of the active enzyme, which catalyzes the hydrolysis of ATP coupled with the exchange of Na(+) and K(+) ions across the plasma membrane. The beta subunit regulates, through assembly of alpha/beta heterodimers, the number of sodium pumps transported to the plasma membrane. This chain is Sodium/potassium-transporting ATPase subunit beta-1 (nrv1), found in Drosophila melanogaster (Fruit fly).